A 182-amino-acid polypeptide reads, in one-letter code: Protein canopy homolog 2 (182 aa).

The N-terminal stretch at 1-20 (MKGWGWLALLLGVLLGTAWA) is a signal peptide. The Saposin B-type domain maps to 24–175 (QDLHCGACRA…KRTDLCDHAL (152 aa)). Intrachain disulfides connect C28–C171, C31–C164, and C86–C137. S115 is modified (phosphoserine). A Prevents secretion from ER motif is present at residues 179–182 (HDEL).

This sequence belongs to the canopy family. As to quaternary structure, interacts with MYLIP/MIR.

The protein localises to the endoplasmic reticulum. Functionally, positive regulator of neurite outgrowth by stabilizing myosin regulatory light chain (MRLC). It prevents MIR-mediated MRLC ubiquitination and its subsequent proteasomal degradation. In Mus musculus (Mouse), this protein is Protein canopy homolog 2 (Cnpy2).